We begin with the raw amino-acid sequence, 502 residues long: Probable glycine dehydrogenase (decarboxylating) subunit 2 (502 aa).

K273 carries the post-translational modification N6-(pyridoxal phosphate)lysine.

It belongs to the GcvP family. C-terminal subunit subfamily. The glycine cleavage system is composed of four proteins: P, T, L and H. In this organism, the P 'protein' is a heterodimer of two subunits. Pyridoxal 5'-phosphate serves as cofactor.

The catalysed reaction is N(6)-[(R)-lipoyl]-L-lysyl-[glycine-cleavage complex H protein] + glycine + H(+) = N(6)-[(R)-S(8)-aminomethyldihydrolipoyl]-L-lysyl-[glycine-cleavage complex H protein] + CO2. Functionally, the glycine cleavage system catalyzes the degradation of glycine. The P protein binds the alpha-amino group of glycine through its pyridoxal phosphate cofactor; CO(2) is released and the remaining methylamine moiety is then transferred to the lipoamide cofactor of the H protein. The sequence is that of Probable glycine dehydrogenase (decarboxylating) subunit 2 from Thermococcus onnurineus (strain NA1).